Reading from the N-terminus, the 749-residue chain is Catalase-peroxidase 2 (749 aa).

The N-terminal stretch at 1–27 is a signal peptide; sequence MFKRTIPLFAAFTLAISPSVFPNYAYA. The tryptophyl-tyrosyl-methioninium (Trp-Tyr) (with M-255) cross-link spans 107–229; it reads WHAAGTYRIY…LAATVMGLIY (123 aa). Catalysis depends on H108, which acts as the Proton acceptor. Positions 229 to 255 form a cross-link, tryptophyl-tyrosyl-methioninium (Tyr-Met) (with W-107); that stretch reads YVNPEGPNGVPDPLAAAEKIRETFGRM. H270 provides a ligand contact to heme b.

It belongs to the peroxidase family. Peroxidase/catalase subfamily. Homodimer or homotetramer. Heme b is required as a cofactor. Post-translationally, formation of the three residue Trp-Tyr-Met cross-link is important for the catalase, but not the peroxidase activity of the enzyme.

The catalysed reaction is H2O2 + AH2 = A + 2 H2O. It carries out the reaction 2 H2O2 = O2 + 2 H2O. In terms of biological role, bifunctional enzyme with both catalase and broad-spectrum peroxidase activity. This Legionella pneumophila (strain Paris) protein is Catalase-peroxidase 2.